A 123-amino-acid polypeptide reads, in one-letter code: Large ribosomal subunit protein bL12 (123 aa).

The protein belongs to the bacterial ribosomal protein bL12 family. As to quaternary structure, homodimer. Part of the ribosomal stalk of the 50S ribosomal subunit. Forms a multimeric L10(L12)X complex, where L10 forms an elongated spine to which 2 to 4 L12 dimers bind in a sequential fashion. Binds GTP-bound translation factors.

Forms part of the ribosomal stalk which helps the ribosome interact with GTP-bound translation factors. Is thus essential for accurate translation. The polypeptide is Large ribosomal subunit protein bL12 (Rhodopseudomonas palustris (strain BisB5)).